Consider the following 540-residue polypeptide: Phosphoenolpyruvate carboxykinase (ATP) (540 aa).

Positions 67, 207, and 213 each coordinate substrate. ATP is bound by residues K213, H232, and 248–256; that span reads GLSGTGKTT. 2 residues coordinate Mn(2+): K213 and H232. D269 is a binding site for Mn(2+). Residues E297, R333, 449–450, and T455 each bind ATP; that span reads RI. R333 is a substrate binding site.

Belongs to the phosphoenolpyruvate carboxykinase (ATP) family. As to quaternary structure, monomer. Requires Mn(2+) as cofactor.

It is found in the cytoplasm. The enzyme catalyses oxaloacetate + ATP = phosphoenolpyruvate + ADP + CO2. Its pathway is carbohydrate biosynthesis; gluconeogenesis. Its function is as follows. Involved in the gluconeogenesis. Catalyzes the conversion of oxaloacetate (OAA) to phosphoenolpyruvate (PEP) through direct phosphoryl transfer between the nucleoside triphosphate and OAA. The polypeptide is Phosphoenolpyruvate carboxykinase (ATP) (Aliivibrio fischeri (strain MJ11) (Vibrio fischeri)).